Reading from the N-terminus, the 110-residue chain is Large ribosomal subunit protein uL22 (110 aa).

Belongs to the universal ribosomal protein uL22 family. In terms of assembly, part of the 50S ribosomal subunit.

This protein binds specifically to 23S rRNA; its binding is stimulated by other ribosomal proteins, e.g. L4, L17, and L20. It is important during the early stages of 50S assembly. It makes multiple contacts with different domains of the 23S rRNA in the assembled 50S subunit and ribosome. Its function is as follows. The globular domain of the protein is located near the polypeptide exit tunnel on the outside of the subunit, while an extended beta-hairpin is found that lines the wall of the exit tunnel in the center of the 70S ribosome. The sequence is that of Large ribosomal subunit protein uL22 from Aliarcobacter butzleri (strain RM4018) (Arcobacter butzleri).